The sequence spans 892 residues: Transmembrane channel-like protein 2-B (892 aa).

The segment at 29–125 is disordered; that stretch reads GINQNLRREE…DESMSEGEMA (97 aa). Composition is skewed to basic residues over residues 48–58 and 66–77; these read RRAKKRRMNRR and RSKKMRMRVRKN. The span at 103–112 shows a compositional bias: low complexity; the sequence is PSSCSSSSDN. 9 helical membrane passes run 235–255, 275–295, 308–328, 403–423, 444–464, 482–502, 616–636, 671–691, and 736–756; these read LVLF…MGIP, FSVL…YGFY, LPLS…MVVI, LANV…YAVV, EVEI…EAIA, IFAL…DEVN, LIFN…LVGI, FYMG…IYSI, and GLII…LNAV. Basic and acidic residues predominate over residues 772–785; that stretch reads QMQRDEEKNRRNNK. 2 disordered regions span residues 772–791 and 796–892; these read QMQR…TNQV and EDLL…PPRR. The span at 862-878 shows a compositional bias: pro residues; it reads PRQPGPLPGNPRGPPPG.

The protein belongs to the TMC family. As to expression, in adults, expression is restricted to the hair cells of inner ear and lateral line organ. Expressed at higher levels in the larval lateral-line neuromasts than in the larval inner ear.

Its subcellular location is the membrane. Its function is as follows. Probable component of the mechanotransducer (MET) non-selective cation channel. This is Transmembrane channel-like protein 2-B from Danio rerio (Zebrafish).